Here is a 180-residue protein sequence, read N- to C-terminus: Inosine/xanthosine triphosphatase (180 aa).

Residue 8-13 (TTNPAK) coordinates substrate. Residues D38 and E68 each coordinate Mg(2+). A substrate-binding site is contributed by 68 to 69 (EA).

It belongs to the YjjX NTPase family. In terms of assembly, homodimer. Mg(2+) is required as a cofactor. It depends on Mn(2+) as a cofactor.

It catalyses the reaction XTP + H2O = XDP + phosphate + H(+). It carries out the reaction ITP + H2O = IDP + phosphate + H(+). Functionally, phosphatase that hydrolyzes non-canonical purine nucleotides such as XTP and ITP to their respective diphosphate derivatives. Probably excludes non-canonical purines from DNA/RNA precursor pool, thus preventing their incorporation into DNA/RNA and avoiding chromosomal lesions. The sequence is that of Inosine/xanthosine triphosphatase from Yersinia pseudotuberculosis serotype IB (strain PB1/+).